Consider the following 191-residue polypeptide: Cell division protein SepF (191 aa).

The segment covering 156-167 (EEASPSNMSNKG) has biased composition (polar residues). The disordered stretch occupies residues 156–191 (EEASPSNMSNKGNDLISKETSPAPEPAWGETVATAL).

The protein belongs to the SepF family. Homodimer. Interacts with FtsZ.

The protein resides in the cytoplasm. In terms of biological role, cell division protein that is part of the divisome complex and is recruited early to the Z-ring. Probably stimulates Z-ring formation, perhaps through the cross-linking of FtsZ protofilaments. Its function overlaps with FtsA. This chain is Cell division protein SepF, found in Prochlorococcus marinus (strain NATL1A).